The sequence spans 253 residues: Ribosomal RNA small subunit methyltransferase J (253 aa).

Residues 98–99, 114–115, 150–151, and Asp172 each bind S-adenosyl-L-methionine; these read RD, ER, and SS.

It belongs to the methyltransferase superfamily. RsmJ family.

The protein localises to the cytoplasm. The catalysed reaction is guanosine(1516) in 16S rRNA + S-adenosyl-L-methionine = N(2)-methylguanosine(1516) in 16S rRNA + S-adenosyl-L-homocysteine + H(+). Functionally, specifically methylates the guanosine in position 1516 of 16S rRNA. The chain is Ribosomal RNA small subunit methyltransferase J from Shewanella pealeana (strain ATCC 700345 / ANG-SQ1).